The following is a 1186-amino-acid chain: ATP-dependent helicase/deoxyribonuclease subunit B (1186 aa).

Belongs to the helicase family. AddB/RexB type 2 subfamily. As to quaternary structure, heterodimer of AddA and RexB. Requires Mg(2+) as cofactor.

Functionally, the heterodimer acts as both an ATP-dependent DNA helicase and an ATP-dependent, dual-direction single-stranded exonuclease. Recognizes the chi site generating a DNA molecule suitable for the initiation of homologous recombination. This subunit has 5' -&gt; 3' nuclease activity but not helicase activity. The sequence is that of ATP-dependent helicase/deoxyribonuclease subunit B from Latilactobacillus sakei subsp. sakei (strain 23K) (Lactobacillus sakei subsp. sakei).